The chain runs to 213 residues: Orotate phosphoribosyltransferase (213 aa).

5-phospho-alpha-D-ribose 1-diphosphate is bound at residue lysine 26. 34-35 (FF) contacts orotate. 5-phospho-alpha-D-ribose 1-diphosphate-binding positions include 72–73 (YK), arginine 99, lysine 100, lysine 103, histidine 105, and 124–132 (DDVITAGTA). The orotate site is built by threonine 128 and arginine 156.

Belongs to the purine/pyrimidine phosphoribosyltransferase family. PyrE subfamily. Homodimer. Mg(2+) serves as cofactor.

The catalysed reaction is orotidine 5'-phosphate + diphosphate = orotate + 5-phospho-alpha-D-ribose 1-diphosphate. Its pathway is pyrimidine metabolism; UMP biosynthesis via de novo pathway; UMP from orotate: step 1/2. Functionally, catalyzes the transfer of a ribosyl phosphate group from 5-phosphoribose 1-diphosphate to orotate, leading to the formation of orotidine monophosphate (OMP). This chain is Orotate phosphoribosyltransferase, found in Pseudomonas paraeruginosa (strain DSM 24068 / PA7) (Pseudomonas aeruginosa (strain PA7)).